Reading from the N-terminus, the 134-residue chain is Cytochrome b5 isoform B (134 aa).

A Cytochrome b5 heme-binding domain is found at 5–81 (AKIFTLSEVS…MEQYYVGEID (77 aa)). Histidine 40 and histidine 64 together coordinate heme. Residues 107-127 (FIIKLLQFLVPLAILGLAVGI) form a helical membrane-spanning segment.

Belongs to the cytochrome b5 family. Interacts with CER1, FAH1, FAH2 and BI-1.

The protein localises to the endoplasmic reticulum membrane. Its function is as follows. Membrane bound hemoprotein which function as an electron carrier for several membrane bound oxygenases, including fatty acid desaturases. This Arabidopsis thaliana (Mouse-ear cress) protein is Cytochrome b5 isoform B.